Here is a 463-residue protein sequence, read N- to C-terminus: MHGSCSFLMLLLPLLLLLVATTGPVGALTDEEKRLMVELHNLYRAQVSPTASDMLHMRWDEELAAFAKAYARQCVWGHNKERGRRGENLFAITDEGMDVPLAMEEWHHEREHYNLSAATCSPGQMCGHYTQVVWAKTERIGCGSHFCEKLQGVEETNIELLVCNYEPPGNVKGKRPYQEGTPCSQCPSGYHCKNSLCEPIGSPEDAQDLPYLVTEAPSFRATEASDSRKMGTPSSLATGIPAFLVTEVSGSLATKALPAVETQAPTSLATKDPPSMATEAPPCVTTEVPSILAAHSLPSLDEEPVTFPKSTHVPIPKSADKVTDKTKVPSRSPENSLDPKMSLTGARELLPHAQEEAEAEAELPPSSEVLASVFPAQDKPGELQATLDHTGHTSSKSLPNFPNTSATANATGGRALALQSSLPGAEGPDKPSVVSGLNSGPGHVWGPLLGLLLLPPLVLAGIF.

Positions 1 to 27 are cleaved as a signal peptide; sequence MHGSCSFLMLLLPLLLLLVATTGPVGA. One can recognise an SCP domain in the interval 37–165; that stretch reads VELHNLYRAQ…TNIELLVCNY (129 aa). N-linked (GlcNAc...) asparagine glycosylation is present at N114. Disordered stretches follow at residues 262–281, 303–341, and 383–408; these read TQAPTSLATKDPPSMATEAP, EPVTFPKSTHVPIPKSADKVTDKTKVPSRSPENSLDPKM, and LQATLDHTGHTSSKSLPNFPNTSATA. Positions 318–327 are enriched in basic and acidic residues; it reads SADKVTDKTK. Residues 386 to 395 are O-glycosylated at one site; the sequence is TLDHTGHTSS. A compositionally biased stretch (polar residues) spans 392 to 408; that stretch reads HTSSKSLPNFPNTSATA. 2 N-linked (GlcNAc...) asparagine glycosylation sites follow: N403 and N409.

Belongs to the CRISP family. Interacts with PSP94/MSMB. N- and O-glycosylated. O-glycosylated with core 1 or possibly core 8 glycans. In terms of tissue distribution, expressed in prostate, testis, ovary and intestine. Concentrates in prostate cancer patient's sera.

It is found in the secreted. Functionally, may inhibit cardiomyocyte growth. This Homo sapiens (Human) protein is Peptidase inhibitor 16 (PI16).